Consider the following 1077-residue polypeptide: Ubiquitin-activating enzyme E1 2 (1077 aa).

Residues 16–36 (SPMKKRRIDHTESADGSAINA) are disordered. ATP-binding positions include Ala-499, Asp-525, Arg-536, Lys-549, and 597 to 598 (DN). Cys-653 serves as the catalytic Glycyl thioester intermediate.

The protein belongs to the ubiquitin-activating E1 family. As to quaternary structure, monomer. Expressed in leaves, flowers, roots and stems. Detected in germinating seeds, cotyledons, hypocotyls, vascular tissues, anthers, filaments, pollen, style, stigma, sepals, petals, ovary, developing ovules, funiculi and silique walls.

The enzyme catalyses ATP + ubiquitin + [E1 ubiquitin-activating enzyme]-L-cysteine = AMP + diphosphate + S-ubiquitinyl-[E1 ubiquitin-activating enzyme]-L-cysteine.. Its pathway is protein modification; protein ubiquitination. Activates ubiquitin by first adenylating its C-terminal glycine residue with ATP, and thereafter linking this residue to the side chain of a cysteine residue in E1, yielding a ubiquitin-E1 thioester and free AMP. This chain is Ubiquitin-activating enzyme E1 2 (UBA2), found in Arabidopsis thaliana (Mouse-ear cress).